The primary structure comprises 436 residues: DEAD-box ATP-dependent RNA helicase CshB (436 aa).

A Q motif motif is present at residues 4 to 32; it reads QTFTQYDFKPFLIDAVRELRFTEPTGIQQ. In terms of domain architecture, Helicase ATP-binding spans 35–209; sequence FPVVKKGVSV…KKYMENPEHI (175 aa). Position 48-55 (48-55) interacts with ATP; the sequence is SQTGSGKT. The DEAD box motif lies at 157 to 160; that stretch reads DEAD. Residues 240–388 form the Helicase C-terminal domain; it reads MLLQFKPYLA…WADLGERRRR (149 aa). Residues 385-436 form a disordered region; the sequence is RRRRKSRKKPNDELDVMATKVIKKPKKVKPNYKRKLATERDKVKRKYSNKKR. Composition is skewed to basic residues over residues 405-419 and 427-436; these read VIKK…YKRK and VKRKYSNKKR.

The protein belongs to the DEAD box helicase family. CshB subfamily.

It localises to the cytoplasm. The enzyme catalyses ATP + H2O = ADP + phosphate + H(+). In terms of biological role, probable DEAD-box RNA helicase. May work in conjunction with the cold shock proteins to ensure proper initiation of transcription at low and optimal temperatures. Unwinds dsRNA in both 5'- and 3'-directions and shows RNA-dependent ATPase activity. Probably has a somewhat redundant function with CshA, as cshA can partially complement the growth effects of a cshB deletion. The polypeptide is DEAD-box ATP-dependent RNA helicase CshB (Bacillus cereus (strain ATCC 14579 / DSM 31 / CCUG 7414 / JCM 2152 / NBRC 15305 / NCIMB 9373 / NCTC 2599 / NRRL B-3711)).